The following is a 1203-amino-acid chain: ATP-dependent helicase/nuclease subunit A (1203 aa).

A UvrD-like helicase ATP-binding domain is found at 4–472 (VKLTPEQNEA…IRLKENFRSR (469 aa)). 25-32 (ASAGSGKT) is an ATP binding site. The UvrD-like helicase C-terminal domain occupies 503 to 785 (VQGNISDYPV…RVMTFHKSKG (283 aa)).

It belongs to the helicase family. AddA subfamily. In terms of assembly, heterodimer of AddA and AddB/RexB. It depends on Mg(2+) as a cofactor.

The enzyme catalyses Couples ATP hydrolysis with the unwinding of duplex DNA by translocating in the 3'-5' direction.. It catalyses the reaction ATP + H2O = ADP + phosphate + H(+). The heterodimer acts as both an ATP-dependent DNA helicase and an ATP-dependent, dual-direction single-stranded exonuclease. Recognizes the chi site generating a DNA molecule suitable for the initiation of homologous recombination. The AddA nuclease domain is required for chi fragment generation; this subunit has the helicase and 3' -&gt; 5' nuclease activities. In Lactococcus lactis subsp. cremoris (strain SK11), this protein is ATP-dependent helicase/nuclease subunit A.